Here is a 576-residue protein sequence, read N- to C-terminus: Zinc finger protein 791 (576 aa).

The region spanning 4 to 90 (VAFEDVSVSF…AENFSPNLSV (87 aa)) is the KRAB domain. 17 C2H2-type zinc fingers span residues 100–122 (YECT…MRSH), 132–154 (YKCK…ERSH), 160–182 (YKCK…ERTH), 188–210 (YECK…ERIH), 216–238 (YECK…ERTH), 244–266 (YACK…MITH), 272–294 (YKCK…ERIH), 300–322 (YKCK…ERIH), 328–350 (YKCK…VRVH), 356–378 (YKCK…ERTH), 384–406 (YECK…KRNH), 412–434 (YECK…MITH), 440–462 (YKCR…ERTH), 468–490 (YECK…KRTH), 496–518 (YECK…MRMH), 524–546 (YKCK…TRIH), and 552–574 (LECK…MRMH).

The protein belongs to the krueppel C2H2-type zinc-finger protein family.

The protein resides in the nucleus. In terms of biological role, may be involved in transcriptional regulation. The polypeptide is Zinc finger protein 791 (ZNF791) (Homo sapiens (Human)).